The sequence spans 178 residues: Peptide deformylase (178 aa).

Positions 102 and 144 each coordinate Fe cation. Residue E145 is part of the active site. H148 is a Fe cation binding site.

This sequence belongs to the polypeptide deformylase family. Requires Fe(2+) as cofactor.

It carries out the reaction N-terminal N-formyl-L-methionyl-[peptide] + H2O = N-terminal L-methionyl-[peptide] + formate. Its function is as follows. Removes the formyl group from the N-terminal Met of newly synthesized proteins. Requires at least a dipeptide for an efficient rate of reaction. N-terminal L-methionine is a prerequisite for activity but the enzyme has broad specificity at other positions. In Leptospira borgpetersenii serovar Hardjo-bovis (strain JB197), this protein is Peptide deformylase.